We begin with the raw amino-acid sequence, 1055 residues long: MTPSIGYVDEDENGQKSKFLRSSDDPYRLSIEEVIEKFETHLENGLSDEQAKSKLAKVGLNNLGADEKISISKILAHQIFNAMVLVLIISLIIALAIKDWISGGVIGFVVFINIFVGFIQELKAEKTMGSLRSLSSPMARALRNGVDSNINAEEVVPGDIIHIKVGDTIPADLRLVDCMNLETDEALLTGESLPVAKDHEEIYDYGAPIPVGDRLNMAFSSSIVAKGRGTGIVVATGLDTEIGKIAKSLKNNDDAVVVKVDKSLNPSTKDYLIAVIKTTKNIIFNVLGTNVGTPLQRKLSWLAILLFWVAVLFAIVVMASQEMRVNRNVAIYAICVALSMIPSSLVVVLTITMAIGAQVMVTKNVIVRKLDSLEALGGINDICSDKTGTLTMGKMIARKVWIPNVGSYLVQNSNEPFNPTVGDISFNENSPKFIKETDDELDFIPHLPSPTPILFEKWLHIATLANIASLNQIQNEMDGSIEWEAHGDATEIAINVFTTRLGYTRDKLIGDSLEHLNEFPFDSSIKRMSTVYKDKDGNSTVYTKGAVERVLSCCKYWYNPELTALSEEDKLLIESNMNALSSEGLRVLAFAQREINISKENVSNREVVESNLIFLGLIGIYDPPRPESAKSVKLCHKAGINVHMLTGDHPGTAKAIAQEVGILPHNLYHYREEVVKVMVMIANEFDSLSDDEIDNLPVLPLVIARCAPQTKVRMIEALHRRGKFVAMTGDGVNDSPSLKKADVGIAMGLNGSDVAKDASDIVLTDDNFASILNAIEEGRRMSSNIQKFVLQLLAENVAQALYLMIGLAFIDKSGYSVFPLSPVEVLWIIVVTSCFPAMGLGQEKASHDILEQPPNATIFTWEVIIDMIAYGFWMAVCCLVCFVCIVYGKGDGSLGENCNEGSDTGCNLVFRGRSGAFAAFTWCALLLAWECIHLRLSFFKMRPELENPWWKQLAIDLWDNQFLFWSVMGAIVSVFPVVYIPVINNKVFLHAPIGYEWGLAVAFTILFLIGAEGWKWFKRVYYRKSNANNPEYDLERNDPFKEYSSFSKSNTMEIV.

At 1–73 (MTPSIGYVDE…GADEKISISK (73 aa)) the chain is on the cytoplasmic side. A helical membrane pass occupies residues 74–94 (ILAHQIFNAMVLVLIISLIIA). The Extracellular portion of the chain corresponds to 95 to 99 (LAIKD). A helical transmembrane segment spans residues 100–120 (WISGGVIGFVVFINIFVGFIQ). Residues 121-298 (ELKAEKTMGS…TNVGTPLQRK (178 aa)) are Cytoplasmic-facing. The chain crosses the membrane as a helical span at residues 299–319 (LSWLAILLFWVAVLFAIVVMA). Over 320 to 328 (SQEMRVNRN) the chain is Extracellular. Residues 329-349 (VAIYAICVALSMIPSSLVVVL) form a helical membrane-spanning segment. At 350–789 (TITMAIGAQV…RMSSNIQKFV (440 aa)) the chain is on the cytoplasmic side. Aspartate 385 serves as the catalytic 4-aspartylphosphate intermediate. Aspartate 385 and threonine 387 together coordinate Mg(2+). ATP is bound by residues threonine 387, glutamate 491, lysine 544, arginine 586, threonine 646, glycine 647, aspartate 648, arginine 705, and lysine 711. Aspartate 730 lines the Mg(2+) pocket. Position 733 (asparagine 733) interacts with ATP. A helical membrane pass occupies residues 790–810 (LQLLAENVAQALYLMIGLAFI). Topologically, residues 811-816 (DKSGYS) are extracellular. A helical transmembrane segment spans residues 817–837 (VFPLSPVEVLWIIVVTSCFPA). Over 838-866 (MGLGQEKASHDILEQPPNATIFTWEVIID) the chain is Cytoplasmic. A helical transmembrane segment spans residues 867 to 887 (MIAYGFWMAVCCLVCFVCIVY). At 888–913 (GKGDGSLGENCNEGSDTGCNLVFRGR) the chain is on the extracellular side. A helical transmembrane segment spans residues 914–934 (SGAFAAFTWCALLLAWECIHL). At 935–962 (RLSFFKMRPELENPWWKQLAIDLWDNQF) the chain is on the cytoplasmic side. A helical transmembrane segment spans residues 963-983 (LFWSVMGAIVSVFPVVYIPVI). The Extracellular portion of the chain corresponds to 984–990 (NNKVFLH). Residues 991–1011 (APIGYEWGLAVAFTILFLIGA) traverse the membrane as a helical segment. At 1012–1055 (EGWKWFKRVYYRKSNANNPEYDLERNDPFKEYSSFSKSNTMEIV) the chain is on the cytoplasmic side.

It belongs to the cation transport ATPase (P-type) (TC 3.A.3) family. Type IID subfamily. Mg(2+) is required as a cofactor. In terms of processing, the active site is phosphorylated in presence of sodium or potassium and in conditions of higher pH. Not phosphorylated in presence of calcium ions.

It localises to the cell membrane. The enzyme catalyses Na(+)(in) + ATP + H2O = Na(+)(out) + ADP + phosphate + H(+). It catalyses the reaction K(+)(in) + ATP + H2O = K(+)(out) + ADP + phosphate + H(+). In terms of biological role, catalyzes the hydrolysis of ATP coupled with the export of sodium and potassium from the cell. May be an inefficient potassium exporter. May transport other cations such as lithium. Sodium/potassium efflux ATPases are involved in salt tolerance and maintaining the membrane potential across the plasma membrane in high salinity (Na+) or alkaline (K+) environments. This Schwanniomyces occidentalis (Yeast) protein is Sodium/potassium exporting P-type ATPase 1.